The sequence spans 835 residues: Pre-mRNA-processing protein 40C (835 aa).

The segment covering 1-20 (MEGENTTDPPYTTAASSGQS) has biased composition (polar residues). The disordered stretch occupies residues 1-22 (MEGENTTDPPYTTAASSGQSIF). 2 WW domains span residues 243 to 276 (GNRLDAWTAHKSEAGVLYYYNSVTGQSTYEKPPG) and 295 to 328 (SLPGTDWALVSTNDGKKYYYNNKTKVSSWQIPAE). Positions 397-459 (SGMPVSSTIT…DSGPSKEECS (63 aa)) are disordered. Over residues 400 to 428 (PVSSTITSEANSGKTTEVTPSGESGNSTG) the composition is skewed to polar residues. FF domains are found at residues 455 to 509 (KEEC…YVKT), 519 to 577 (RAAH…RVLS), and 590 to 643 (RAAA…YIAE). Disordered regions lie at residues 649–677 (RGDDHEMKARDEEDKLRERERELRKRKER) and 714–738 (TESKPILERDPQKRASNPDLEPADK). 2 consecutive FF domains span residues 691–748 (RKEA…HVKS) and 750–815 (YERC…YVED).

The protein belongs to the PRPF40 family. In terms of assembly, interacts (via the WW domains) with the phosphorylated C-terminal domain of NRPB1 (via CTD domain). As to expression, expressed in roots, shoots, rosette leaves, cauline leaves, stems and flowers.

The protein resides in the nucleus. Functionally, binds the phosphorylated C-terminal domain (CTD) of the largest subunit of RNA polymerase II and functions as a scaffold for RNA processing machineries. May be involved in pre-mRNA splicing. The chain is Pre-mRNA-processing protein 40C from Arabidopsis thaliana (Mouse-ear cress).